Reading from the N-terminus, the 73-residue chain is FGESCIAGRFIVPLGQQVTDQRDCALYKCVNYNKKFALETKRCATVNLKSGCKTVPGGAGAAFPSCCPMVTCK.

Lys-73 is modified (lysine amide).

The protein belongs to the scorpion La1-like peptide family. Contains 4 disulfide bonds. In terms of tissue distribution, expressed by the venom gland.

The protein localises to the secreted. Its function is as follows. Not toxic to insect. The polypeptide is Venom peptide La1 (Liocheles australasiae (Dwarf wood scorpion)).